The chain runs to 434 residues: Trigger factor (434 aa).

Residues 163–248 (GDTAVIDFAG…VHDIKRKELP (86 aa)) form the PPIase FKBP-type domain.

This sequence belongs to the FKBP-type PPIase family. Tig subfamily.

It is found in the cytoplasm. The enzyme catalyses [protein]-peptidylproline (omega=180) = [protein]-peptidylproline (omega=0). Involved in protein export. Acts as a chaperone by maintaining the newly synthesized protein in an open conformation. Functions as a peptidyl-prolyl cis-trans isomerase. The sequence is that of Trigger factor from Shouchella clausii (strain KSM-K16) (Alkalihalobacillus clausii).